Here is a 279-residue protein sequence, read N- to C-terminus: NH(3)-dependent NAD(+) synthetase (279 aa).

46-53 (GISGGQDS) is a binding site for ATP. Asp-52 contacts Mg(2+). Arg-145 serves as a coordination point for deamido-NAD(+). Residue Thr-165 coordinates ATP. Glu-170 is a Mg(2+) binding site. Positions 178 and 185 each coordinate deamido-NAD(+). Positions 194 and 216 each coordinate ATP. Position 265-266 (265-266 (HK)) interacts with deamido-NAD(+).

It belongs to the NAD synthetase family. Homodimer.

It carries out the reaction deamido-NAD(+) + NH4(+) + ATP = AMP + diphosphate + NAD(+) + H(+). The protein operates within cofactor biosynthesis; NAD(+) biosynthesis; NAD(+) from deamido-NAD(+) (ammonia route): step 1/1. Its function is as follows. Catalyzes the ATP-dependent amidation of deamido-NAD to form NAD. Uses ammonia as a nitrogen source. The polypeptide is NH(3)-dependent NAD(+) synthetase (Rhodococcus jostii (strain RHA1)).